The following is a 137-amino-acid chain: Acetyltransferase Atu2258 (137 aa).

The N-acetyltransferase domain occupies 1–137; that stretch reads MNFVLSDVAD…QSITWLEKRF (137 aa). CoA is bound by residues 66 to 68, Gly-74, and 108 to 110; these read LFV and RTY.

In terms of biological role, catalyzes the transfer of an acetyl group from acetyl coenzyme A (AcCoA) to an acceptor substrate and releases both CoA and the acetylated product. It prefers glucosamine 6-phosphate or dopamine. It can also use the thialysine, N(8)-acetylspermidine, chloramphenicol, puromycin, polymyxin B, and 4-aminobutyrate ethyl ester. The sequence is that of Acetyltransferase Atu2258 from Agrobacterium fabrum (strain C58 / ATCC 33970) (Agrobacterium tumefaciens (strain C58)).